A 286-amino-acid polypeptide reads, in one-letter code: MNILTGTQRTSREKKKVKKLNLLVLLGVFCGVGAVGDADVKVSDALSQSILSEPRIRVLLLSESTTALVEAKGAFSVFGDGELLRVSSQGQRCAAHALYGGIRWGENYPNVECLKIEPLDGSASLFVNGIQYKGSVYIHKTERNCLFVVNELAIEDYLKSVLSVKYLKELDKEALSACVILERTALYERLLAGNANSFWHVNAQEDRYGGYGVTSQFYGVEEAVDWTSRLVLDNPEGLVFNADYLLQSNVDRLAIEGYNARQILEKFYKDADLVVIESWEDNNRGV.

This sequence belongs to the chlamydial CPn_0389/CT_041/TC_0311 family.

This is an uncharacterized protein from Chlamydia muridarum (strain MoPn / Nigg).